The sequence spans 212 residues: Inactive ribonuclease-like protein 10 (212 aa).

Positions 1-24 (MKVTLVHLLFMMLLLLLGLGVGLG) are cleaved as a signal peptide. Asn-129 and Asn-204 each carry an N-linked (GlcNAc...) asparagine glycan.

Belongs to the pancreatic ribonuclease family. In terms of processing, the N-terminus is blocked. Glycosylated. In terms of tissue distribution, male-specific expression in proximal caput of the epididymis.

It localises to the secreted. Its function is as follows. Secreted proximal epididymal protein required for post-testicular sperm maturation and male fertility. May be involved in sperm adhesion to the egg zona pellucida. Does not have ribonuclease activity. The polypeptide is Inactive ribonuclease-like protein 10 (Rnase10) (Rattus norvegicus (Rat)).